The chain runs to 46 residues: Myoregulin (46 aa).

Residues methionine 1–isoleucine 21 lie on the Cytoplasmic side of the membrane. Residues valine 22–valine 42 form a helical membrane-spanning segment. Over valine 43–serine 46 the chain is Lumenal.

As to quaternary structure, homooligomer. Monomer. Interacts with ATP2A1/SERCA1. Interacts as a monomer with ATP2A2/SERCA2; the interaction inhibits ATP2A2 activity.

The protein localises to the sarcoplasmic reticulum membrane. In terms of biological role, inhibits the activity of ATP2A1/SERCA1 ATPase in sarcoplasmic reticulum by decreasing the apparent affinity of the ATPase for Ca(2+), thereby acting as a key regulator of skeletal muscle activity. Its high expression in adult skeletal muscle, suggests that it constitutes the predominant regulator of ATP2A1/SERCA1 in adult skeletal muscle. Also inhibits the activity of ATP2A2/SERCA2 and ATP2A3/SERCA3. This Homo sapiens (Human) protein is Myoregulin.